We begin with the raw amino-acid sequence, 178 residues long: Adenine phosphoribosyltransferase (178 aa).

The protein belongs to the purine/pyrimidine phosphoribosyltransferase family. In terms of assembly, homodimer.

It localises to the cytoplasm. The catalysed reaction is AMP + diphosphate = 5-phospho-alpha-D-ribose 1-diphosphate + adenine. It functions in the pathway purine metabolism; AMP biosynthesis via salvage pathway; AMP from adenine: step 1/1. Its function is as follows. Catalyzes a salvage reaction resulting in the formation of AMP, that is energically less costly than de novo synthesis. This is Adenine phosphoribosyltransferase from Bacteroides fragilis (strain ATCC 25285 / DSM 2151 / CCUG 4856 / JCM 11019 / LMG 10263 / NCTC 9343 / Onslow / VPI 2553 / EN-2).